The following is a 210-amino-acid chain: Kinetochore protein Spc25 (210 aa).

A coiled-coil region spans residues threonine 42–isoleucine 106.

Belongs to the SPC25 family. Component of the Ndc80 complex, which is composed of Ndc80, Nuf2 and Spc25.

It is found in the nucleus. Its subcellular location is the chromosome. It localises to the centromere. The protein localises to the kinetochore. Functionally, acts as a component of the essential kinetochore-associated Ndc80 complex, which is required for chromosome segregation and spindle checkpoint activity during meiosis and mitosis. Required for kinetochore integrity and the organization of stable microtubule binding sites in the outer plate of the kinetochore. Participates in SAC signaling that responds specifically to disruptions in spindle microtubule dynamics. The NDC80 complex synergistically enhances the affinity of the SKA1 complex for microtubules and may allow the NDC80 complex to track depolymerizing microtubules. This is Kinetochore protein Spc25 from Drosophila virilis (Fruit fly).